The primary structure comprises 158 residues: NAD(P)H-quinone oxidoreductase subunit N (158 aa).

It belongs to the complex I NdhN subunit family. NDH-1 can be composed of about 15 different subunits; different subcomplexes with different compositions have been identified which probably have different functions.

It is found in the cellular thylakoid membrane. It catalyses the reaction a plastoquinone + NADH + (n+1) H(+)(in) = a plastoquinol + NAD(+) + n H(+)(out). The enzyme catalyses a plastoquinone + NADPH + (n+1) H(+)(in) = a plastoquinol + NADP(+) + n H(+)(out). In terms of biological role, NDH-1 shuttles electrons from an unknown electron donor, via FMN and iron-sulfur (Fe-S) centers, to quinones in the respiratory and/or the photosynthetic chain. The immediate electron acceptor for the enzyme in this species is believed to be plastoquinone. Couples the redox reaction to proton translocation, and thus conserves the redox energy in a proton gradient. Cyanobacterial NDH-1 also plays a role in inorganic carbon-concentration. The sequence is that of NAD(P)H-quinone oxidoreductase subunit N from Prochlorococcus marinus (strain MIT 9312).